Consider the following 883-residue polypeptide: Collagen, type I, alpha 1b (883 aa).

Positions 1 to 883 (QMSYVDHSKS…LGGSNDVELR (883 aa)) are disordered. The span at 13–33 (PPQPGPMGPMGPRGPPGPPGS) shows a compositional bias: pro residues. Composition is skewed to low complexity over residues 34-57 (SGPQGFTGPPGEPGEPGASGAMGS), 113-122 (VPGVMGARGR), and 129-140 (SGARGNDGNTGP). Gly residues-rich tracts occupy residues 147–161 (TGGETGPAGGRGNEG) and 185–194 (GTDGGPGAKG). Composition is skewed to low complexity over residues 195 to 205 (SPGAAGLAGAP), 214 to 223 (AQGAVGAPGP), and 230 to 248 (PGASGPKGEPGAKGEPGPA). A compositionally biased stretch (gly residues) spans 285–297 (GADGGAGGKGAPG). 2 stretches are compositionally biased toward low complexity: residues 310 to 326 (ATGESGSPGAPGAPGSK) and 390 to 402 (VGAPGPSGVAGPA). A compositionally biased stretch (gly residues) spans 415 to 424 (GAPGLGGPTG). The segment covering 425 to 444 (ARGAPGPAGNDGAKGEPGAA) has biased composition (low complexity). Composition is skewed to gly residues over residues 445–454 (GAPGGLGAPG) and 478–487 (GGKGGDGAPG). The span at 512 to 542 (AGPTGPRGETGPPGPAGFAGPPGADGQPGAK) shows a compositional bias: low complexity. Positions 564–573 (GPKGGAGPPG) are enriched in gly residues. Low complexity-rich tracts occupy residues 574–584 (ATGFPGPAGRV), 717–726 (APGAVGPSGK), and 742–756 (SGPAGVRGPAGPAGA). The span at 757 to 771 (KGDRGEAGEAGDRGH) shows a compositional bias: basic and acidic residues. The segment covering 792-812 (PAGASGPAGPRGPAGSNGAPG) has biased composition (low complexity). The span at 821–836 (AGPPGPPGPAGPPGPP) shows a compositional bias: pro residues.

This sequence belongs to the fibrillar collagen family.

In Epinephelus costae (Goldblotch grouper), this protein is Collagen, type I, alpha 1b.